The primary structure comprises 210 residues: Ribonuclease HII (210 aa).

Positions 17 to 206 (DIICGVDEAG…VRALLGGVTP (190 aa)) constitute an RNase H type-2 domain. Positions 23, 24, and 115 each coordinate a divalent metal cation.

Belongs to the RNase HII family. Requires Mn(2+) as cofactor. The cofactor is Mg(2+).

The protein localises to the cytoplasm. It carries out the reaction Endonucleolytic cleavage to 5'-phosphomonoester.. Endonuclease that specifically degrades the RNA of RNA-DNA hybrids. The protein is Ribonuclease HII of Janthinobacterium sp. (strain Marseille) (Minibacterium massiliensis).